The sequence spans 61 residues: Small ribosomal subunit protein uS14 (61 aa).

C24, C27, C40, and C43 together coordinate Zn(2+).

It belongs to the universal ribosomal protein uS14 family. Zinc-binding uS14 subfamily. In terms of assembly, part of the 30S ribosomal subunit. Contacts proteins S3 and S10. The cofactor is Zn(2+).

In terms of biological role, binds 16S rRNA, required for the assembly of 30S particles and may also be responsible for determining the conformation of the 16S rRNA at the A site. The polypeptide is Small ribosomal subunit protein uS14 (Trichlorobacter lovleyi (strain ATCC BAA-1151 / DSM 17278 / SZ) (Geobacter lovleyi)).